A 119-amino-acid polypeptide reads, in one-letter code: Beta-2-microglobulin (119 aa).

Positions 1 to 20 (MARFVVAALLVLLCLSGLEA) are cleaved as a signal peptide. Residues 25–114 (PKIQVYSRHP…VTFPTPKTVK (90 aa)) form the Ig-like C1-type domain. A disulfide bond links Cys-45 and Cys-100.

This sequence belongs to the beta-2-microglobulin family. Heterodimer of an alpha chain and a beta chain. Beta-2-microglobulin is the beta-chain of major histocompatibility complex class I molecules.

Its subcellular location is the secreted. In terms of biological role, component of the class I major histocompatibility complex (MHC). Involved in the presentation of peptide antigens to the immune system. The protein is Beta-2-microglobulin (B2M) of Cebus albifrons (White-fronted capuchin).